The primary structure comprises 223 residues: Peptidyl-prolyl cis-trans isomerase FKBP16-3, chloroplastic (223 aa).

Residues 1-36 (MAASSPSLLLPLGSASRNGLTTKNPNSSRYIAARVI) constitute a chloroplast transit peptide. Residues 37–76 (ASETREQSCKISNLSSRREAMLLVLGVSGGLSMSSLAAYA) constitute a thylakoid transit peptide. A PPIase FKBP-type domain is found at 124–216 (GFQVAANYVA…IFDVSLEFIP (93 aa)).

This sequence belongs to the FKBP-type PPIase family.

Its subcellular location is the plastid. The protein localises to the chloroplast thylakoid lumen. The enzyme catalyses [protein]-peptidylproline (omega=180) = [protein]-peptidylproline (omega=0). Its function is as follows. PPIases accelerate the folding of proteins. It catalyzes the cis-trans isomerization of proline imidic peptide bonds in oligopeptides. This is Peptidyl-prolyl cis-trans isomerase FKBP16-3, chloroplastic (FKBP16-3) from Arabidopsis thaliana (Mouse-ear cress).